Reading from the N-terminus, the 299-residue chain is 4-diphosphocytidyl-2-C-methyl-D-erythritol kinase (299 aa).

Lysine 16 is an active-site residue. Proline 97–alanine 107 lines the ATP pocket. Aspartate 140 is a catalytic residue.

It belongs to the GHMP kinase family. IspE subfamily.

It catalyses the reaction 4-CDP-2-C-methyl-D-erythritol + ATP = 4-CDP-2-C-methyl-D-erythritol 2-phosphate + ADP + H(+). Its pathway is isoprenoid biosynthesis; isopentenyl diphosphate biosynthesis via DXP pathway; isopentenyl diphosphate from 1-deoxy-D-xylulose 5-phosphate: step 3/6. In terms of biological role, catalyzes the phosphorylation of the position 2 hydroxy group of 4-diphosphocytidyl-2C-methyl-D-erythritol. This is 4-diphosphocytidyl-2-C-methyl-D-erythritol kinase from Roseobacter denitrificans (strain ATCC 33942 / OCh 114) (Erythrobacter sp. (strain OCh 114)).